The primary structure comprises 911 residues: Alpha-actinin-4 (911 aa).

The interval 1-269 (MVDYHAANQS…YVSSFYHAFS (269 aa)) is actin-binding. The segment at 8 to 31 (NQSYQYGPSSGSNGAGGGGTMGDY) is disordered. The interaction with VCL stretch occupies residues 12-26 (QYGPSSGSNGAGGGG). Phosphotyrosine is present on Tyr-31. The interval 40 to 61 (RDLLLDPAWEKQQRKTFTAWCN) is interaction with VCL. 2 consecutive Calponin-homology (CH) domains span residues 50 to 154 (KQQR…LRFA) and 163 to 269 (TSAK…HAFS). Positions 84–88 (LMLLL) match the LXXLL motif motif. The segment at 108 to 126 (KINNVNKALDFIASKGVKL) is interaction with VCL. Lys-114 carries the post-translational modification N6-acetyllysine. Residues 177–192 (TAPYKNVNVQNFHISW) form a polyphosphoinositide (PIP2)-binding region. Lys-214 carries the N6-acetyllysine modification. Phosphothreonine is present on Thr-249. Spectrin repeat units follow at residues 293-403 (HLME…WLLN), 413-518 (HLAE…ALEK), 528-639 (QLHL…ALLE), and 649-752 (HLRR…EVEN). Lys-592 and Lys-625 each carry N6-acetyllysine. At Ser-696 the chain carries Phosphoserine. The segment at 736-911 (WEQLLTTIAR…STALYGESDL (176 aa)) is mediates interaction with MICALL2. EF-hand domains follow at residues 765 to 800 (EQMQEFRASFNHFDKDHGGALGPEEFKACLISLGYD) and 806 to 841 (QGDAEFNRIMSVVDPNHSGLVTFQAFIDFMSRETTD). Asp-778 provides a ligand contact to Ca(2+). Lys-779 bears the N6-acetyllysine mark. Ca(2+) is bound by residues Asp-780 and Glu-789. An N6-acetyllysine modification is found at Lys-859. Residue Ser-909 is modified to Phosphoserine.

This sequence belongs to the alpha-actinin family. In terms of assembly, homodimer; antiparallel. Identified in a IGF2BP1-dependent mRNP granule complex containing untranslated mRNAs. Component of the CART complex, at least composed of ACTN4, HGS/HRS, MYO5B and TRIM3. Binds TRIM3 at the N-terminus. Interacts with MAGI1. Interacts with PDLIM2. Identified in a complex with CASK, IQGAP1, MAGI2, NPHS1, SPTAN1 and SPTBN1. Interacts with MICALL2 (preferentially in opened conformation); stimulated by RAB13 activation. Interacts with PPARG and RARA. Binds to VCL; this interaction triggers VCL conformational changes. Interacts with SEPTIN14. Interacts with IGSF8.

The protein resides in the nucleus. The protein localises to the cytoplasm. It is found in the cell junction. Its subcellular location is the cytoskeleton. It localises to the stress fiber. The protein resides in the perinuclear region. Functionally, F-actin cross-linking protein which is thought to anchor actin to a variety of intracellular structures. This is a bundling protein. Probably involved in vesicular trafficking via its association with the CART complex. The CART complex is necessary for efficient transferrin receptor recycling but not for EGFR degradation. Involved in tight junction assembly in epithelial cells probably through interaction with MICALL2. Links MICALL2 to the actin cytoskeleton and recruits it to the tight junctions. May also function as a transcriptional coactivator, stimulating transcription mediated by the nuclear hormone receptors PPARG and RARA. Association with IGSF8 regulates the immune synapse formation and is required for efficient T-cell activation. In Bos taurus (Bovine), this protein is Alpha-actinin-4.